The sequence spans 156 residues: MRNSEKQDNLVRAFKALLKEESFGSQGEIVDALKQQGFESINQSKVSRMLTKFGAVRTRNAKMEMVYCLPAELGVPTVSSSLRELVLDIDHNAALVVIHTGPGAAQLIARLLDSLGKSEGILGVVAGDDTIFITPTMPVSTEQLFKSVCELFEYTG.

This sequence belongs to the ArgR family.

The protein localises to the cytoplasm. The protein operates within amino-acid biosynthesis; L-arginine biosynthesis [regulation]. In terms of biological role, regulates arginine biosynthesis genes. This chain is Arginine repressor, found in Vibrio campbellii (strain ATCC BAA-1116).